Here is a 206-residue protein sequence, read N- to C-terminus: Guanylate kinase (206 aa).

One can recognise a Guanylate kinase-like domain in the interval 4–182; that stretch reads ANLFIISAPS…AVQNLIHIIS (179 aa). ATP is bound at residue 11-18; that stretch reads APSGAGKT.

Belongs to the guanylate kinase family.

It localises to the cytoplasm. It catalyses the reaction GMP + ATP = GDP + ADP. Its function is as follows. Essential for recycling GMP and indirectly, cGMP. The chain is Guanylate kinase from Coxiella burnetii (strain RSA 493 / Nine Mile phase I).